The chain runs to 102 residues: Small ribosomal subunit protein uS10 (102 aa).

Belongs to the universal ribosomal protein uS10 family. Part of the 30S ribosomal subunit.

Involved in the binding of tRNA to the ribosomes. The sequence is that of Small ribosomal subunit protein uS10 from Rhodospirillum centenum (strain ATCC 51521 / SW).